Consider the following 151-residue polypeptide: 3-hydroxyacyl-[acyl-carrier-protein] dehydratase FabZ (151 aa).

Residue His54 is part of the active site.

Belongs to the thioester dehydratase family. FabZ subfamily.

The protein localises to the cytoplasm. It catalyses the reaction a (3R)-hydroxyacyl-[ACP] = a (2E)-enoyl-[ACP] + H2O. Functionally, involved in unsaturated fatty acids biosynthesis. Catalyzes the dehydration of short chain beta-hydroxyacyl-ACPs and long chain saturated and unsaturated beta-hydroxyacyl-ACPs. The polypeptide is 3-hydroxyacyl-[acyl-carrier-protein] dehydratase FabZ (Salmonella agona (strain SL483)).